Consider the following 341-residue polypeptide: Phosphate acyltransferase (341 aa).

The protein belongs to the PlsX family. In terms of assembly, homodimer. Probably interacts with PlsY.

The protein resides in the cytoplasm. The catalysed reaction is a fatty acyl-[ACP] + phosphate = an acyl phosphate + holo-[ACP]. Its pathway is lipid metabolism; phospholipid metabolism. Functionally, catalyzes the reversible formation of acyl-phosphate (acyl-PO(4)) from acyl-[acyl-carrier-protein] (acyl-ACP). This enzyme utilizes acyl-ACP as fatty acyl donor, but not acyl-CoA. The sequence is that of Phosphate acyltransferase from Vibrio campbellii (strain ATCC BAA-1116).